We begin with the raw amino-acid sequence, 199 residues long: Small ribosomal subunit protein uS14m (199 aa).

A disordered region spans residues 28 to 67 (LSTPAPEPAKPSSEETTESTEPATSVEDAGEPMKEKRITQ).

It belongs to the universal ribosomal protein uS14 family. As to quaternary structure, component of the mitochondrial ribosome small subunit (28S) which comprises a 12S rRNA and about 30 distinct proteins. Interacts with LIAT1.

It localises to the mitochondrion. This is Small ribosomal subunit protein uS14m (mrps-14) from Caenorhabditis elegans.